The sequence spans 78 residues: Acyl carrier protein (78 aa).

One can recognise a Carrier domain in the interval 2–77; it reads STIEERVKKI…AAIDYVNSHQ (76 aa). Serine 37 is subject to O-(pantetheine 4'-phosphoryl)serine.

Belongs to the acyl carrier protein (ACP) family. In terms of processing, 4'-phosphopantetheine is transferred from CoA to a specific serine of apo-ACP by AcpS. This modification is essential for activity because fatty acids are bound in thioester linkage to the sulfhydryl of the prosthetic group.

It localises to the cytoplasm. It functions in the pathway lipid metabolism; fatty acid biosynthesis. In terms of biological role, carrier of the growing fatty acid chain in fatty acid biosynthesis. The sequence is that of Acyl carrier protein from Pseudomonas putida (strain W619).